Here is a 166-residue protein sequence, read N- to C-terminus: Small ribosomal subunit protein bS6 (166 aa).

Basic and acidic residues-rich tracts occupy residues 96–142 (HEEG…DRPP) and 149–166 (GGDRGPRRPREGFEGGAE). Residues 96–166 (HEEGPSAMMQ…PREGFEGGAE (71 aa)) are disordered.

This sequence belongs to the bacterial ribosomal protein bS6 family.

Binds together with bS18 to 16S ribosomal RNA. This is Small ribosomal subunit protein bS6 from Mesorhizobium japonicum (strain LMG 29417 / CECT 9101 / MAFF 303099) (Mesorhizobium loti (strain MAFF 303099)).